We begin with the raw amino-acid sequence, 505 residues long: Glutamate--tRNA ligase (505 aa).

The 'HIGH' region signature appears at 11 to 21 (PSPTGPLHIGG). Residues 260 to 264 (KLSKR) carry the 'KMSKS' region motif. Lysine 263 is an ATP binding site.

It belongs to the class-I aminoacyl-tRNA synthetase family. Glutamate--tRNA ligase type 1 subfamily. Monomer.

The protein resides in the cytoplasm. The catalysed reaction is tRNA(Glu) + L-glutamate + ATP = L-glutamyl-tRNA(Glu) + AMP + diphosphate. Functionally, catalyzes the attachment of glutamate to tRNA(Glu) in a two-step reaction: glutamate is first activated by ATP to form Glu-AMP and then transferred to the acceptor end of tRNA(Glu). This chain is Glutamate--tRNA ligase, found in Christiangramia forsetii (strain DSM 17595 / CGMCC 1.15422 / KT0803) (Gramella forsetii).